A 274-amino-acid polypeptide reads, in one-letter code: Diaminopimelate epimerase (274 aa).

Residues N11, Q44, and N64 each contribute to the substrate site. C73 functions as the Proton donor in the catalytic mechanism. Substrate is bound by residues 74–75 (GN), N157, N190, and 208–209 (ER). C217 functions as the Proton acceptor in the catalytic mechanism. 218 to 219 (GS) serves as a coordination point for substrate.

It belongs to the diaminopimelate epimerase family. As to quaternary structure, homodimer.

Its subcellular location is the cytoplasm. The enzyme catalyses (2S,6S)-2,6-diaminopimelate = meso-2,6-diaminopimelate. Its pathway is amino-acid biosynthesis; L-lysine biosynthesis via DAP pathway; DL-2,6-diaminopimelate from LL-2,6-diaminopimelate: step 1/1. Its function is as follows. Catalyzes the stereoinversion of LL-2,6-diaminopimelate (L,L-DAP) to meso-diaminopimelate (meso-DAP), a precursor of L-lysine and an essential component of the bacterial peptidoglycan. The polypeptide is Diaminopimelate epimerase (Sodalis glossinidius (strain morsitans)).